Reading from the N-terminus, the 156-residue chain is Large ribosomal subunit protein uL22 (156 aa).

It belongs to the universal ribosomal protein uL22 family. Part of the 50S ribosomal subunit.

In terms of biological role, this protein binds specifically to 23S rRNA. It makes multiple contacts with different domains of the 23S rRNA in the assembled 50S subunit and ribosome. Functionally, the globular domain of the protein is located near the polypeptide exit tunnel on the outside of the subunit, while an extended beta-hairpin is found that lines the wall of the exit tunnel in the center of the 70S ribosome. In Hyperthermus butylicus (strain DSM 5456 / JCM 9403 / PLM1-5), this protein is Large ribosomal subunit protein uL22.